The sequence spans 120 residues: uncharacterized protein (120 aa).

A helical transmembrane segment spans residues 47–63 (VSIVIGLCTVLISAGAG).

Its subcellular location is the membrane. This is an uncharacterized protein from Sinorhizobium fredii (strain NBRC 101917 / NGR234).